The primary structure comprises 58 residues: Large ribosomal subunit protein uL30 (58 aa).

This sequence belongs to the universal ribosomal protein uL30 family. In terms of assembly, part of the 50S ribosomal subunit.

This chain is Large ribosomal subunit protein uL30, found in Zymomonas mobilis subsp. mobilis (strain ATCC 31821 / ZM4 / CP4).